The primary structure comprises 158 residues: Ribosome maturation factor RimP (158 aa).

The protein belongs to the RimP family.

It is found in the cytoplasm. Functionally, required for maturation of 30S ribosomal subunits. This chain is Ribosome maturation factor RimP, found in Pseudomonas putida (strain ATCC 47054 / DSM 6125 / CFBP 8728 / NCIMB 11950 / KT2440).